The following is a 188-amino-acid chain: Guanylate kinase (188 aa).

The 182-residue stretch at Thr-2–Ala-183 folds into the Guanylate kinase-like domain. Ala-9–Ser-16 is an ATP binding site.

It belongs to the guanylate kinase family.

It localises to the cytoplasm. The catalysed reaction is GMP + ATP = GDP + ADP. Essential for recycling GMP and indirectly, cGMP. This Porphyromonas gingivalis (strain ATCC BAA-308 / W83) protein is Guanylate kinase.